The chain runs to 135 residues: Ribosome-binding factor A (135 aa).

Belongs to the RbfA family. Monomer. Binds 30S ribosomal subunits, but not 50S ribosomal subunits or 70S ribosomes.

It localises to the cytoplasm. Functionally, one of several proteins that assist in the late maturation steps of the functional core of the 30S ribosomal subunit. Associates with free 30S ribosomal subunits (but not with 30S subunits that are part of 70S ribosomes or polysomes). Required for efficient processing of 16S rRNA. May interact with the 5'-terminal helix region of 16S rRNA. This Aliivibrio fischeri (strain MJ11) (Vibrio fischeri) protein is Ribosome-binding factor A.